A 580-amino-acid polypeptide reads, in one-letter code: Phosphatase and actin regulator 1 (580 aa).

Residues S67 and S78 each carry the phosphoserine modification. The residue at position 104 (T104) is a Phosphothreonine. Residues 108–129 (RRRSKFANLGRIFKPWKWRKKK) carry the Nuclear localization signal motif. The stretch at 138-163 (AALERKISMRQSREELIKRGVLKEIY) is one RPEL 1 repeat. 2 disordered regions span residues 330–350 (SEQRVPCSTSYHSSGLHSSDG) and 374–408 (DNKENVPHEPDYEDSPCLYGREEEEEEEDEDDDAS). Positions 337–348 (STSYHSSGLHSS) are enriched in low complexity. The span at 374 to 383 (DNKENVPHEP) shows a compositional bias: basic and acidic residues. Acidic residues predominate over residues 395-407 (EEEEEEEDEDDDA). RPEL repeat units lie at residues 422-447 (DSLAIKLSNRPSKRELEEKNILPRQT), 460-485 (TKLTRRLSQRPTAEELEQRNILKPRN), and 498-523 (RRLTRKLSQRPTVEELRERKILIRFS). A disordered region spans residues 463–494 (TRRLSQRPTAEELEQRNILKPRNEQEEQEEKR). S467 is modified (phosphoserine). Residues 471–494 (TAEELEQRNILKPRNEQEEQEEKR) show a composition bias toward basic and acidic residues. At S505 the chain carries Phosphoserine.

It belongs to the phosphatase and actin regulator family. As to quaternary structure, interacts (via RPEL repeats) with ACTA1 and PPP1CA; ACTA1 and PPP1CA compete for the same binding site.

It is found in the cytoplasm. The protein resides in the synapse. It localises to the nucleus. Binds actin monomers (G actin) and plays a role in multiple processes including the regulation of actin cytoskeleton dynamics, actin stress fibers formation, cell motility and survival, formation of tubules by endothelial cells, and regulation of PPP1CA activity. Involved in the regulation of cortical neuron migration and dendrite arborization. This Mus musculus (Mouse) protein is Phosphatase and actin regulator 1 (Phactr1).